Here is a 520-residue protein sequence, read N- to C-terminus: Cytochrome P450 4F3 (520 aa).

A helical transmembrane segment spans residues Leu11–Leu31. The heme site is built by Glu328 and Cys468.

This sequence belongs to the cytochrome P450 family. Heme is required as a cofactor. In terms of tissue distribution, selectively expressed in blood neutrophils and bone marrow cells. Coexpressed with CYP4F3B in prostate, ileum and trachea. Selectively expressed in liver and kidney. It is also the predominant CYP4F isoform in trachea and tissues of the gastrointestinal tract.

It is found in the endoplasmic reticulum membrane. The protein resides in the microsome membrane. The enzyme catalyses an organic molecule + reduced [NADPH--hemoprotein reductase] + O2 = an alcohol + oxidized [NADPH--hemoprotein reductase] + H2O + H(+). The catalysed reaction is leukotriene B4 + reduced [NADPH--hemoprotein reductase] + O2 = 20-hydroxy-leukotriene B4 + oxidized [NADPH--hemoprotein reductase] + H2O + H(+). It carries out the reaction 20-hydroxy-leukotriene B4 + reduced [NADPH--hemoprotein reductase] + O2 = 20-oxo-leukotriene B4 + oxidized [NADPH--hemoprotein reductase] + 2 H2O + H(+). It catalyses the reaction 20-oxo-leukotriene B4 + reduced [NADPH--hemoprotein reductase] + O2 = 20-carboxy-leukotriene B4 + oxidized [NADPH--hemoprotein reductase] + H2O + 2 H(+). The enzyme catalyses (5Z,8Z,11Z)-eicosatrienoate + reduced [NADPH--hemoprotein reductase] + O2 = 20-hydroxy-(5Z,8Z,11Z)-eicosatrienoate + oxidized [NADPH--hemoprotein reductase] + H2O + H(+). The catalysed reaction is (5Z,8Z,11Z,14Z)-eicosatetraenoate + reduced [NADPH--hemoprotein reductase] + O2 = 20-hydroxy-(5Z,8Z,11Z,14Z)-eicosatetraenoate + oxidized [NADPH--hemoprotein reductase] + H2O + H(+). It carries out the reaction (5Z,8Z,11Z,14Z,17Z)-eicosapentaenoate + reduced [NADPH--hemoprotein reductase] + O2 = 19-hydroxy-(5Z,8Z,11Z,14Z,17Z)-eicosapentaenoate + oxidized [NADPH--hemoprotein reductase] + H2O + H(+). It catalyses the reaction (5Z,8Z,11Z,14Z,17Z)-eicosapentaenoate + reduced [NADPH--hemoprotein reductase] + O2 = 20-hydroxy-(5Z,8Z,11Z,14Z,17Z)-eicosapentaenoate + oxidized [NADPH--hemoprotein reductase] + H2O + H(+). The enzyme catalyses (4Z,7Z,10Z,13Z,16Z,19Z)-docosahexaenoate + reduced [NADPH--hemoprotein reductase] + O2 = 21-hydroxy-(4Z,7Z,10Z,13Z,16Z,19Z)-docosahexaenoate + oxidized [NADPH--hemoprotein reductase] + H2O + H(+). The catalysed reaction is (4Z,7Z,10Z,13Z,16Z,19Z)-docosahexaenoate + reduced [NADPH--hemoprotein reductase] + O2 = 22-hydroxy-(4Z,7Z,10Z,13Z,16Z,19Z)-docosahexaenoate + oxidized [NADPH--hemoprotein reductase] + H2O + H(+). It carries out the reaction 8,9-epoxy-(5Z,11Z,14Z)-eicosatrienoate + reduced [NADPH--hemoprotein reductase] + O2 = 20-hydroxy-8,9-epoxy-(5Z,11Z,14Z)-eicosatrienoate + oxidized [NADPH--hemoprotein reductase] + H2O + H(+). It catalyses the reaction 11,12-epoxy-(5Z,8Z,14Z)-eicosatrienoate + reduced [NADPH--hemoprotein reductase] + O2 = 20-hydroxy-11,12-epoxy-(5Z,8Z,14Z)-eicosatrienoate + oxidized [NADPH--hemoprotein reductase] + H2O + H(+). The enzyme catalyses 14,15-epoxy-(5Z,8Z,11Z)-eicosatrienoate + reduced [NADPH--hemoprotein reductase] + O2 = 20-hydroxy-14,15-epoxy-(5Z,8Z,11Z)-eicosatrienoate + oxidized [NADPH--hemoprotein reductase] + H2O + H(+). The catalysed reaction is 12,13-epoxy-(9Z)-octadecenoate + reduced [NADPH--hemoprotein reductase] + O2 = 18-hydroxy-12,13-epoxy-(9Z)-octadecenoate + oxidized [NADPH--hemoprotein reductase] + H2O + H(+). It carries out the reaction 9,10-epoxy-(12Z)-octadecenoate + reduced [NADPH--hemoprotein reductase] + O2 = 18-hydroxy-9,10-epoxy-(12Z)-octadecenoate + oxidized [NADPH--hemoprotein reductase] + H2O + H(+). It catalyses the reaction 9,10-epoxyoctadecanoate + reduced [NADPH--hemoprotein reductase] + O2 = 18-hydroxy-9,10-epoxy-octadecanoate + oxidized [NADPH--hemoprotein reductase] + H2O + H(+). The enzyme catalyses (12R)-hydroxy-(9Z)-octadecenoate + reduced [NADPH--hemoprotein reductase] + O2 = (12R),18-dihydroxy-(9Z)-octadecenoate + oxidized [NADPH--hemoprotein reductase] + H2O + H(+). The catalysed reaction is 12-hydroxyoctadecanoate + reduced [NADPH--hemoprotein reductase] + O2 = 12,18-dihydroxyoctadecanoate + oxidized [NADPH--hemoprotein reductase] + H2O + H(+). It carries out the reaction 5-hydroxy-(6E,8Z,11Z,14Z)-eicosatetraenoate + reduced [NADPH--hemoprotein reductase] + O2 = 5,20-dihydroxy-(6E,8Z,11Z,14Z)-eicosatetraenoate + oxidized [NADPH--hemoprotein reductase] + H2O + H(+). It catalyses the reaction 8-hydroxy-(5Z,9E,11Z,14Z)-eicosatetraenoate + reduced [NADPH--hemoprotein reductase] + O2 = 8,20-dihydroxy-(5Z,9E,11Z,14Z)-eicosatetraenoate + oxidized [NADPH--hemoprotein reductase] + H2O + H(+). The enzyme catalyses 12-hydroxy-(5Z,8Z,10E,14Z)-eicosatetraenoate + reduced [NADPH--hemoprotein reductase] + O2 = 12,20-dihydroxy-(5Z,8Z,10E,14Z)-eicosatetraenoate + oxidized [NADPH--hemoprotein reductase] + H2O + H(+). The catalysed reaction is 5-hydroxy-(6E,8Z,11Z,14Z,17Z)-eicosapentaenoate + reduced [NADPH--hemoprotein reductase] + O2 = 5,20-dihydroxy-(6E,8Z,11Z,14Z,17Z)-eicosapentaenoate + oxidized [NADPH--hemoprotein reductase] + H2O + H(+). It carries out the reaction lipoxin A4 + reduced [NADPH--hemoprotein reductase] + O2 = 20-hydroxy-lipoxin A4 + oxidized [NADPH--hemoprotein reductase] + H2O + H(+). It catalyses the reaction lipoxin B4 + reduced [NADPH--hemoprotein reductase] + O2 = 20-hydroxy-lipoxin B4 + oxidized [NADPH--hemoprotein reductase] + H2O + H(+). The enzyme catalyses 22-hydroxydocosanoate + reduced [NADPH--hemoprotein reductase] + O2 = 22-oxodocosanoate + oxidized [NADPH--hemoprotein reductase] + 2 H2O + H(+). The catalysed reaction is 22-oxodocosanoate + reduced [NADPH--hemoprotein reductase] + O2 = docosanedioate + oxidized [NADPH--hemoprotein reductase] + H2O + 2 H(+). It carries out the reaction docosanoate + reduced [NADPH--hemoprotein reductase] + O2 = 22-hydroxydocosanoate + oxidized [NADPH--hemoprotein reductase] + H2O + H(+). It catalyses the reaction tetracosanoate + reduced [NADPH--hemoprotein reductase] + O2 = 24-hydroxytetracosanoate + oxidized [NADPH--hemoprotein reductase] + H2O + H(+). The enzyme catalyses hexacosanoate + reduced [NADPH--hemoprotein reductase] + O2 = 26-hydroxyhexacosanoate + oxidized [NADPH--hemoprotein reductase] + H2O + H(+). The catalysed reaction is 26-hydroxyhexacosanoate + reduced [NADPH--hemoprotein reductase] + O2 = 26-oxohexacosanoate + oxidized [NADPH--hemoprotein reductase] + 2 H2O + H(+). It carries out the reaction 26-oxohexacosanoate + reduced [NADPH--hemoprotein reductase] + O2 = hexacosanedioate + oxidized [NADPH--hemoprotein reductase] + H2O + 2 H(+). It catalyses the reaction 3-hydroxyoctadecanoate + reduced [NADPH--hemoprotein reductase] + O2 = 3,18-dihydroxyoctadecanoate + oxidized [NADPH--hemoprotein reductase] + H2O + H(+). The enzyme catalyses 3-hydroxyhexadecanoate + reduced [NADPH--hemoprotein reductase] + O2 = 3,16-dihydroxyhexadecanoate + oxidized [NADPH--hemoprotein reductase] + H2O + H(+). It functions in the pathway lipid metabolism; leukotriene B4 degradation. It participates in lipid metabolism; arachidonate metabolism. With respect to regulation, inhibited by carbon monoxide (CO). Functionally, a cytochrome P450 monooxygenase involved in the metabolism of various endogenous substrates, including fatty acids and their oxygenated derivatives (oxylipins). Mechanistically, uses molecular oxygen inserting one oxygen atom into a substrate, and reducing the second into a water molecule, with two electrons provided by NADPH via cytochrome P450 reductase (CPR; NADPH-ferrihemoprotein reductase). May play a role in inactivation of pro-inflammatory and anti-inflammatory oxylipins during the resolution of inflammation. In terms of biological role, catalyzes predominantly the oxidation of the terminal carbon (omega-oxidation) of oxylipins in myeloid cells, displaying higher affinity for arachidonate metabolite leukotriene B4 (LTB4). Inactivates LTB4 via three successive oxidative transformations to 20-hydroxy-LTB4, then to 20-oxo-LTB4 and to 20-carboxy-LTB4. Has omega-hydroxylase activity toward long-chain fatty acid epoxides with preference for 8,9-epoxy-(5Z,11Z,14Z)-eicosatrienoate (EET) and 9,10-epoxyoctadecanoate. Omega-hydroxylates monohydroxy polyunsaturated fatty acids (PUFAs), including hydroxyeicosatetraenoates (HETEs) and hydroxyeicosapentaenoates (HEPEs), to dihydroxy compounds. Contributes to the degradation of saturated very long-chain fatty acids (VLCFAs) such as docosanoic acid, by catalyzing successive omega-oxidations to the corresponding dicarboxylic acid, thereby initiating chain shortening. Has low hydroxylase activity toward PUFAs. Catalyzes predominantly the oxidation of the terminal carbon (omega-oxidation) of polyunsaturated fatty acids (PUFAs). Participates in the conversion of arachidonic acid to 20-hydroxyeicosatetraenoic acid (20-HETE), a signaling molecule acting both as vasoconstrictive and natriuretic with overall effect on arterial blood pressure. Has high omega-hydroxylase activity toward other PUFAs, including eicosatrienoic acid (ETA), eicosapentaenoic acid (EPA) and docosahexaenoic acid (DHA). Can also catalyze the oxidation of the penultimate carbon (omega-1 oxidation) of PUFAs with lower efficiency. Contributes to the degradation of saturated very long-chain fatty acids (VLCFAs) such as docosanoic acid and hexacosanoic acid, by catalyzing successive omega-oxidations to the corresponding dicarboxylic acids, thereby initiating chain shortening. Omega-hydroxylates long-chain 3-hydroxy fatty acids, likely initiating the oxidative conversion to the corresponding 3-hydroxydicarboxylic fatty acids. Has omega-hydroxylase activity toward long-chain fatty acid epoxides with preference for 8,9-epoxy-(5Z,11Z,14Z)-eicosatrienoate (EET) and 9,10-epoxyoctadecanoate. The chain is Cytochrome P450 4F3 from Homo sapiens (Human).